We begin with the raw amino-acid sequence, 145 residues long: NADH-quinone oxidoreductase subunit A 1 (145 aa).

A run of 3 helical transmembrane segments spans residues 18 to 38 (ILPL…LLLA), 71 to 91 (VPFY…VFIF), and 104 to 124 (GLIH…WLWL).

This sequence belongs to the complex I subunit 3 family. As to quaternary structure, NDH-1 is composed of 14 different subunits. Subunits NuoA, H, J, K, L, M, N constitute the membrane sector of the complex.

The protein resides in the cell inner membrane. It catalyses the reaction a quinone + NADH + 5 H(+)(in) = a quinol + NAD(+) + 4 H(+)(out). Functionally, NDH-1 shuttles electrons from NADH, via FMN and iron-sulfur (Fe-S) centers, to quinones in the respiratory chain. The immediate electron acceptor for the enzyme in this species is believed to be ubiquinone. Couples the redox reaction to proton translocation (for every two electrons transferred, four hydrogen ions are translocated across the cytoplasmic membrane), and thus conserves the redox energy in a proton gradient. This Geotalea uraniireducens (strain Rf4) (Geobacter uraniireducens) protein is NADH-quinone oxidoreductase subunit A 1.